A 409-amino-acid polypeptide reads, in one-letter code: O-glucosyltransferase rumi (409 aa).

The first 20 residues, 1–20 (MLINVVLIILLVGLNGKASG), serve as a signal peptide directing secretion. Cystine bridges form between cysteine 62/cysteine 73, cysteine 71/cysteine 376, cysteine 118/cysteine 124, and cysteine 280/cysteine 303. Aspartate 149 acts as the Proton donor/acceptor in catalysis. The segment at 190-195 (ATKLHP) is interaction with the consensus sequence C-X-S-X-[PA]-C in peptide substrates. UDP-alpha-D-glucose-binding positions include 227–231 (RGSRT), arginine 235, 274–276 (VSF), and 292–296 (AASFR). The Prevents secretion from ER motif lies at 406 to 409 (KDEL).

The protein belongs to the glycosyltransferase 90 family.

The protein resides in the endoplasmic reticulum lumen. Its pathway is protein modification; protein glycosylation. Functionally, protein O-glucosyltransferase. Catalyzes the reaction that attaches glucose through an O-glycosidic linkage to a conserved serine residue found in the consensus sequence C-X-S-X-[PA]-C in epidermal growth factor-like repeats. Regulates Notch signaling by glucosylating Notch in the ER, glucosylation is required for the correct folding and cleavage of Notch. The sequence is that of O-glucosyltransferase rumi from Drosophila pseudoobscura pseudoobscura (Fruit fly).